Here is a 382-residue protein sequence, read N- to C-terminus: Chaperone protein DnaJ (382 aa).

Residues 5–70 (DYYEVLGVSR…DKKAAYDRYG (66 aa)) form the J domain. Residues 141–219 (GVQKTINVPA…CHGAGRVEKE (79 aa)) form a CR-type zinc finger. Residues Cys154, Cys157, Cys171, Cys174, Cys193, Cys196, Cys207, and Cys210 each coordinate Zn(2+). CXXCXGXG motif repeat units follow at residues 154 to 161 (CDACKGTG), 171 to 178 (CPTCSGMG), 193 to 200 (CPTCNGMG), and 207 to 214 (CKVCHGAG).

The protein belongs to the DnaJ family. In terms of assembly, homodimer. Requires Zn(2+) as cofactor.

The protein resides in the cytoplasm. Functionally, participates actively in the response to hyperosmotic and heat shock by preventing the aggregation of stress-denatured proteins and by disaggregating proteins, also in an autonomous, DnaK-independent fashion. Unfolded proteins bind initially to DnaJ; upon interaction with the DnaJ-bound protein, DnaK hydrolyzes its bound ATP, resulting in the formation of a stable complex. GrpE releases ADP from DnaK; ATP binding to DnaK triggers the release of the substrate protein, thus completing the reaction cycle. Several rounds of ATP-dependent interactions between DnaJ, DnaK and GrpE are required for fully efficient folding. Also involved, together with DnaK and GrpE, in the DNA replication of plasmids through activation of initiation proteins. This is Chaperone protein DnaJ from Cereibacter sphaeroides (strain ATCC 17029 / ATH 2.4.9) (Rhodobacter sphaeroides).